Reading from the N-terminus, the 335-residue chain is MSRLFSNLFNLLLIAAIGFGLSGCVTSRLPVASTSPWQPLELNTESNPLDISFSDANHGFVVGTNRLIMESNDGGVSWKKRSLDLEEDENFRLISIDFNGNEGWIAGQPGLVMHSTDAGKNWSRLKLENKLPGDPYLITNLGPNNAELATNAGAIYRTSDGGTTWKATVSEAAGAVRDLRRSAAGNYVSVSSLGNFFSTLDLGQDVWQNHERVSSKRVQSLGYQPNGELWMVARGAEIRLNDQPGNVDSWGKAMIPITNGYNYLDLSWDPNGGIWAAGGNGTLIKTLDDGKSWQIDPMGDTQPSNLIRILFDTSSESQAKGFVLGERGHLLRWVG.

The first 23 residues, Met1–Gly23, serve as a signal peptide directing secretion. Residue Cys24 is the site of N-palmitoyl cysteine attachment. Cys24 carries S-diacylglycerol cysteine lipidation.

This sequence belongs to the Ycf48 family. As to quaternary structure, part of early PSII assembly complexes which includes D1 (psbA) and PsbI; not found in mature PSII. Binds to the lumenal side of PSII complexes. Interacts with YidC.

It localises to the cellular thylakoid membrane. Its function is as follows. A factor required for optimal assembly of photosystem II (PSII), acting in the early stages of PSII assembly. Also plays a role in replacement of photodamaged D1 (psbA). Assists YidC in synthesis of chlorophyll-binding proteins. In Prochlorococcus marinus (strain MIT 9313), this protein is Photosystem II assembly lipoprotein Ycf48.